Here is a 334-residue protein sequence, read N- to C-terminus: G-protein coupled receptor 12 (334 aa).

Over 1-48 (MNEDPKVNLSGLPRDCIEAGTPENISAAVPSQGSVVESEPELVVNPWD) the chain is Extracellular. N-linked (GlcNAc...) asparagine glycans are attached at residues N8 and N24. The helical transmembrane segment at 49 to 69 (IVLCSSGTLICCENAVVVLII) threads the bilayer. Over 70–78 (FHSPSLRAP) the chain is Cytoplasmic. A helical membrane pass occupies residues 79 to 99 (MFLLIGSLALADLLAGLGLII). Residues 100-113 (NFVFAYLLQSEATK) are Extracellular-facing. Residues 114 to 134 (LVTIGLIVASFSASVCSLLAI) traverse the membrane as a helical segment. Residues 135–158 (TVDRYLSLYYALTYHSERTVTFTY) lie on the Cytoplasmic side of the membrane. The chain crosses the membrane as a helical span at residues 159–179 (VMLVMLWGTSTCLGLLPVMGW). Over 180–199 (NCLRDESTCSVVRPLTKNNA) the chain is Extracellular. The helical transmembrane segment at 200–220 (AILSISFLFMFALMLQLYIQI) threads the bilayer. The Cytoplasmic portion of the chain corresponds to 221–252 (CKIVMRHAHQIALQHHFLATSHYVTTRKGIST). Residues 253-273 (LALILGTFAACWMPFTLYSLI) traverse the membrane as a helical segment. The Extracellular segment spans residues 274-282 (ADYTYPSIY). The chain crosses the membrane as a helical span at residues 283–303 (TYATLLPATYNSIINPVIYAF). Residues 304-334 (RNQEIQKALCLICCGCIPNTLSQRARSPSDV) are Cytoplasmic-facing. The S-palmitoyl cysteine moiety is linked to residue C317. Residues S330 and S332 each carry the phosphoserine modification.

Belongs to the G-protein coupled receptor 1 family. In terms of tissue distribution, expressed in the brain, pituitary gland and testis.

It localises to the cell membrane. Functionally, receptor with constitutive G(s) signaling activity that activates cyclic AMP. Promotes neurite outgrowth and blocks myelin inhibition in neurons. This Rattus norvegicus (Rat) protein is G-protein coupled receptor 12 (Gpr12).